The sequence spans 74 residues: Small ribosomal subunit protein eS17 (74 aa).

This sequence belongs to the eukaryotic ribosomal protein eS17 family.

The sequence is that of Small ribosomal subunit protein eS17 from Aeropyrum pernix (strain ATCC 700893 / DSM 11879 / JCM 9820 / NBRC 100138 / K1).